Reading from the N-terminus, the 284-residue chain is Shikimate dehydrogenase (NADP(+)) (284 aa).

Shikimate is bound by residues 20-22 (SIS) and S67. The Proton acceptor role is filled by K71. D83 is an NADP(+) binding site. Residues N92 and D107 each contribute to the shikimate site. NADP(+)-binding positions include 129–133 (GAGGA) and I227. Y229 provides a ligand contact to shikimate. G250 lines the NADP(+) pocket.

It belongs to the shikimate dehydrogenase family. As to quaternary structure, homodimer.

It carries out the reaction shikimate + NADP(+) = 3-dehydroshikimate + NADPH + H(+). Its pathway is metabolic intermediate biosynthesis; chorismate biosynthesis; chorismate from D-erythrose 4-phosphate and phosphoenolpyruvate: step 4/7. In terms of biological role, involved in the biosynthesis of the chorismate, which leads to the biosynthesis of aromatic amino acids. Catalyzes the reversible NADPH linked reduction of 3-dehydroshikimate (DHSA) to yield shikimate (SA). This chain is Shikimate dehydrogenase (NADP(+)), found in Streptococcus pneumoniae (strain ATCC 700669 / Spain 23F-1).